Reading from the N-terminus, the 221-residue chain is MNKGQYFWNELWCEGRISFHKEEVNPDLIAYVSSLNIPAKGRVLVPLCGKSVDMLWLVRQGYHVVGIELVEKAILQFVQEHQITVRENTIGQAKQYFTDNLNLWVTDIFALNSALIEPVDAIYDRAALVALPKKLRPAYVDICLKWLKPGGSILLKTLQYNQEKVQGPPYSVSPEEIALSYQQCAKIELLKSQKRIQEPNDHLFNLGISEVNDYVWCIRKG.

4 residues coordinate S-adenosyl-L-methionine: Trp-12, Leu-47, Glu-68, and Arg-125.

The protein belongs to the class I-like SAM-binding methyltransferase superfamily. TPMT family.

The protein localises to the cytoplasm. The enzyme catalyses S-adenosyl-L-methionine + a thiopurine = S-adenosyl-L-homocysteine + a thiopurine S-methylether.. The polypeptide is Thiopurine S-methyltransferase (Legionella pneumophila (strain Paris)).